We begin with the raw amino-acid sequence, 582 residues long: Inactive metallocarboxypeptidase ECM14 (582 aa).

The first 20 residues, 1 to 20, serve as a signal peptide directing secretion; sequence MHILQVITGATLVSVPFVSA. A propeptide spanning residues 21 to 172 is cleaved from the precursor; that stretch reads IPSSTSEFLP…QAVYESYPQP (152 aa). The region spanning 200–522 is the Peptidase M14 domain; sequence DYQPLSVIIP…NAVLVFGQFL (323 aa). Residues His265 and Glu268 each coordinate Zn(2+). Substrate-binding positions include 265–268, Arg323, and 340–341; these read HARE and DR. Cys334 and Cys357 are joined by a disulfide. Residues Asn381 and Asn387 are each glycosylated (N-linked (GlcNAc...) asparagine). His397 is a binding site for Zn(2+). 398-399 provides a ligand contact to substrate; that stretch reads SY. Residues 561–571 show a composition bias toward acidic residues; that stretch reads SNQLEDDDNEN. Residues 561 to 582 form a disordered region; the sequence is SNQLEDDDNENDTLLGFRTQKV. N-linked (GlcNAc...) asparagine glycosylation is present at Asn571.

This sequence belongs to the peptidase M14 family. Zn(2+) is required as a cofactor.

The protein resides in the vacuole. It localises to the secreted. In terms of biological role, inactive carboxypeptidase that may play a role in cell wall organization and biogenesis. The polypeptide is Inactive metallocarboxypeptidase ECM14 (ECM14) (Coccidioides posadasii (strain C735) (Valley fever fungus)).